A 299-amino-acid polypeptide reads, in one-letter code: Zinc-alpha-2-glycoprotein (299 aa).

Positions 1–17 (MVPVLLALLLLLGPAVS) are cleaved as a signal peptide. 3 N-linked (GlcNAc...) asparagine glycosylation sites follow: asparagine 24, asparagine 125, and asparagine 256. 2 disulfide bridges follow: cysteine 120-cysteine 183 and cysteine 222-cysteine 277. The region spanning 204-289 (PSVSVTGHAA…EHRSLTRPLT (86 aa)) is the Ig-like C1-type domain.

The protein belongs to the MHC class I family. As to quaternary structure, interacts with PIP.

The protein resides in the secreted. Functionally, stimulates lipid degradation in adipocytes and causes the extensive fat losses associated with some advanced cancers. The protein is Zinc-alpha-2-glycoprotein (AZGP1) of Bos taurus (Bovine).